The chain runs to 235 residues: Small ribosomal subunit protein eS4 (235 aa).

An S4 RNA-binding domain is found at 38 to 99; it reads VTLLSIIRDY…GESYRVVYND (62 aa).

The protein belongs to the eukaryotic ribosomal protein eS4 family.

In Thermoplasma acidophilum (strain ATCC 25905 / DSM 1728 / JCM 9062 / NBRC 15155 / AMRC-C165), this protein is Small ribosomal subunit protein eS4 (rps4e).